A 304-amino-acid polypeptide reads, in one-letter code: 4-diphosphocytidyl-2-C-methyl-D-erythritol kinase (304 aa).

Lys-23 is an active-site residue. Pro-111 to Ser-121 contributes to the ATP binding site. Residue Asp-153 is part of the active site.

This sequence belongs to the GHMP kinase family. IspE subfamily. Homodimer.

It catalyses the reaction 4-CDP-2-C-methyl-D-erythritol + ATP = 4-CDP-2-C-methyl-D-erythritol 2-phosphate + ADP + H(+). Its pathway is isoprenoid biosynthesis; isopentenyl diphosphate biosynthesis via DXP pathway; isopentenyl diphosphate from 1-deoxy-D-xylulose 5-phosphate: step 3/6. Catalyzes the phosphorylation of the position 2 hydroxy group of 4-diphosphocytidyl-2C-methyl-D-erythritol. The polypeptide is 4-diphosphocytidyl-2-C-methyl-D-erythritol kinase (Wigglesworthia glossinidia brevipalpis).